The sequence spans 312 residues: Porphobilinogen deaminase (312 aa).

Cysteine 241 bears the S-(dipyrrolylmethanemethyl)cysteine mark.

It belongs to the HMBS family. In terms of assembly, monomer. Dipyrromethane is required as a cofactor.

It carries out the reaction 4 porphobilinogen + H2O = hydroxymethylbilane + 4 NH4(+). It participates in porphyrin-containing compound metabolism; protoporphyrin-IX biosynthesis; coproporphyrinogen-III from 5-aminolevulinate: step 2/4. It functions in the pathway porphyrin-containing compound metabolism; chlorophyll biosynthesis. In terms of biological role, tetrapolymerization of the monopyrrole PBG into the hydroxymethylbilane pre-uroporphyrinogen in several discrete steps. This chain is Porphobilinogen deaminase, found in Chlorobaculum tepidum (strain ATCC 49652 / DSM 12025 / NBRC 103806 / TLS) (Chlorobium tepidum).